A 447-amino-acid polypeptide reads, in one-letter code: Growth/differentiation factor 7 (447 aa).

The signal sequence occupies residues 1–19 (MDLSAAAALCLWLLSACRP). Residues 20-318 (RDGLEAAAVL…AVTAGRRRRR (299 aa)) constitute a propeptide that is removed on maturation. A glycan (N-linked (GlcNAc...) asparagine) is linked at Asn-80. The disordered stretch occupies residues 292–346 (LAAQPPPDPGTGTGSPRAVTAGRRRRRTALAGTRTAQGSGGGAGRGHGRRGRSRC). Residues 337 to 346 (GHGRRGRSRC) are compositionally biased toward basic residues. 3 disulfides stabilise this stretch: Cys-346–Cys-412, Cys-375–Cys-444, and Cys-379–Cys-446.

The protein belongs to the TGF-beta family. As to quaternary structure, homodimer; disulfide-linked. In terms of tissue distribution, highly expressed in the primary aera of brain neocortex.

It localises to the secreted. In terms of biological role, may play an active role in the motor area of the primate neocortex. The sequence is that of Growth/differentiation factor 7 (GDF7) from Chlorocebus aethiops (Green monkey).